Consider the following 512-residue polypeptide: Cytochrome P450 4d1 (512 aa).

2 residues coordinate heme: Glu-316 and Cys-456.

This sequence belongs to the cytochrome P450 family. Requires heme as cofactor.

It is found in the endoplasmic reticulum membrane. The protein localises to the microsome membrane. Involved in the metabolism of insect hormones and in the breakdown of synthetic insecticides. In Drosophila melanogaster (Fruit fly), this protein is Cytochrome P450 4d1 (Cyp4d1).